We begin with the raw amino-acid sequence, 473 residues long: Cytochrome c-552 (473 aa).

The first 33 residues, 1 to 33 (MQHGDEMMKKMTGKSFALSALVAASFMAAGAMA), serve as a signal peptide directing secretion. Histidine 93 lines the heme c pocket. Heme is bound by residues cysteine 121, cysteine 124, and lysine 125. Cysteine 159, cysteine 162, histidine 163, cysteine 201, cysteine 204, and histidine 205 together coordinate heme c. Ca(2+) contacts are provided by glutamate 207, tyrosine 208, lysine 256, and glutamine 258. Residue tyrosine 208 coordinates substrate. Histidine 259 contacts substrate. 9 residues coordinate heme c: histidine 270, cysteine 277, cysteine 280, histidine 281, histidine 296, cysteine 309, cysteine 312, histidine 313, and histidine 388.

The protein belongs to the cytochrome c-552 family. It depends on Ca(2+) as a cofactor. The cofactor is heme c.

The protein localises to the periplasm. It catalyses the reaction 6 Fe(III)-[cytochrome c] + NH4(+) + 2 H2O = 6 Fe(II)-[cytochrome c] + nitrite + 8 H(+). It participates in nitrogen metabolism; nitrate reduction (assimilation). Catalyzes the reduction of nitrite to ammonia, consuming six electrons in the process. In Shewanella sp. (strain ANA-3), this protein is Cytochrome c-552.